The primary structure comprises 139 residues: uncharacterized protein (139 aa).

An HTH cro/C1-type domain is found at 19 to 73 (IRLRRTMLGMSQEKLGESLGITFQQIQKYEKGTNRVGASRLQNISQILNVPVSFF). The segment at residues 30-49 (QEKLGESLGITFQQIQKYEK) is a DNA-binding region (H-T-H motif).

This is an uncharacterized protein from Rhizobium meliloti (strain 1021) (Ensifer meliloti).